The following is a 183-amino-acid chain: Alkyl hydroperoxide reductase AhpD (183 aa).

The active-site Proton donor is C132. C132 and C135 form a disulfide bridge. The active-site Cysteine sulfenic acid (-SOH) intermediate is the C135.

This sequence belongs to the AhpD family.

The catalysed reaction is N(6)-[(R)-dihydrolipoyl]-L-lysyl-[lipoyl-carrier protein] + a hydroperoxide = N(6)-[(R)-lipoyl]-L-lysyl-[lipoyl-carrier protein] + an alcohol + H2O. In terms of biological role, antioxidant protein with alkyl hydroperoxidase activity. Required for the reduction of the AhpC active site cysteine residues and for the regeneration of the AhpC enzyme activity. This Acidobacterium capsulatum (strain ATCC 51196 / DSM 11244 / BCRC 80197 / JCM 7670 / NBRC 15755 / NCIMB 13165 / 161) protein is Alkyl hydroperoxide reductase AhpD.